The chain runs to 301 residues: Ribonuclease H2 subunit A (301 aa).

Met1 carries the N-acetylmethionine modification. An RNase H type-2 domain is found at 28–251; that stretch reads PCVLGVDEAG…AQAILEKEAE (224 aa). A divalent metal cation is bound by residues Asp34, Glu35, and Asp142. At Thr217 the chain carries Phosphothreonine. Positions 255–264 are enriched in acidic residues; the sequence is WEDSEAEEDP. Positions 255–284 are disordered; it reads WEDSEAEEDPERPGKITSYFSQGPQTCRPQ. Phosphoserine is present on Ser258. Residues 272–282 show a composition bias toward polar residues; sequence SYFSQGPQTCR.

This sequence belongs to the RNase HII family. Eukaryotic subfamily. The RNase H2 complex is a heterotrimer composed of the catalytic subunit RNASEH2A and the non-catalytic subunits RNASEH2B and RNASEH2C. The cofactor is Mn(2+). Requires Mg(2+) as cofactor.

The protein resides in the nucleus. It carries out the reaction Endonucleolytic cleavage to 5'-phosphomonoester.. Its function is as follows. Catalytic subunit of RNase HII, an endonuclease that specifically degrades the RNA of RNA:DNA hybrids. Participates in DNA replication, possibly by mediating the removal of lagging-strand Okazaki fragment RNA primers during DNA replication. Mediates the excision of single ribonucleotides from DNA:RNA duplexes. The sequence is that of Ribonuclease H2 subunit A (Rnaseh2a) from Mus musculus (Mouse).